A 102-amino-acid chain; its full sequence is Carboxysome shell protein CsoS1C (102 aa).

The BMC domain occupies 8–93 (ALGMIETRGL…PHKEVEPVLA (86 aa)).

This sequence belongs to the bacterial microcompartments protein family. CsoS1 subfamily. Homohexamer with a small central pore.

The protein localises to the carboxysome. Its function is as follows. One of shell proteins of the carboxysome, a polyhedral inclusion where RuBisCO (ribulose bisphosphate carboxylase, ccbL-ccbS) is sequestered. Assembles into hexamers which make sheets that form the facets of the polyhedral carboxysome. The shell probably limits the diffusion of CO(2) into and out of the carboxysome. This is Carboxysome shell protein CsoS1C from Hydrogenovibrio crunogenus (strain DSM 25203 / XCL-2) (Thiomicrospira crunogena).